The following is a 160-amino-acid chain: 17.9 kDa class II heat shock protein (160 aa).

Residues Asp44–Ala160 enclose the sHSP domain.

Belongs to the small heat shock protein (HSP20) family.

The protein resides in the cytoplasm. The chain is 17.9 kDa class II heat shock protein (HSP17.9) from Helianthus annuus (Common sunflower).